Here is a 214-residue protein sequence, read N- to C-terminus: Small ribosomal subunit protein eS6 (214 aa).

The protein belongs to the eukaryotic ribosomal protein eS6 family.

This is Small ribosomal subunit protein eS6 from Saccharolobus solfataricus (strain ATCC 35092 / DSM 1617 / JCM 11322 / P2) (Sulfolobus solfataricus).